The chain runs to 122 residues: Large ribosomal subunit protein uL14 (122 aa).

Belongs to the universal ribosomal protein uL14 family. Part of the 50S ribosomal subunit. Forms a cluster with proteins L3 and L19. In the 70S ribosome, L14 and L19 interact and together make contacts with the 16S rRNA in bridges B5 and B8.

Its function is as follows. Binds to 23S rRNA. Forms part of two intersubunit bridges in the 70S ribosome. This is Large ribosomal subunit protein uL14 from Dechloromonas aromatica (strain RCB).